The sequence spans 2623 residues: Immunoglobulin superfamily member 10 (2623 aa).

Residues 1–28 (MKVKGRGITCLLVSFAVICLVATPGGKA) form the signal peptide. The LRRNT domain maps to 29 to 56 (CPRRCACYMPTEVHCTFRYLTSIPDSIP). 6 LRR repeats span residues 58–79 (NVER…DFSG), 82–103 (KLEL…TFSD), 106–127 (ALQV…TFYG), 130–151 (SLTR…VFYG), 154–175 (FLRL…TFVS), and 186–207 (FIKF…MVSY). The 63-residue stretch at 219-281 (NPWTCDCHLK…VSAAAFQCAK (63 aa)) folds into the LRRCT domain. N-linked (GlcNAc...) asparagine glycosylation is found at Asn-319 and Asn-439. Ig-like C2-type domains lie at 461-567 (PRAE…YRIT) and 571-661 (PLVE…FQVS). Disulfide bonds link Cys-497/Cys-551 and Cys-595/Cys-645. N-linked (GlcNAc...) asparagine glycosylation is present at Asn-627. 2 disordered regions span residues 668 to 692 (RPLE…HLKE) and 767 to 788 (AMPD…QLPN). 2 N-linked (GlcNAc...) asparagine glycosylation sites follow: Asn-774 and Asn-999. Disordered stretches follow at residues 1334–1376 (TQTE…AMTP) and 1434–1453 (STIA…TTTR). The span at 1335 to 1356 (QTERSRAQTIQREQEPQKKNRT) shows a compositional bias: basic and acidic residues. Polar residues predominate over residues 1357–1373 (DPNISPDQSSGFTTPTA). 10 Ig-like C2-type domains span residues 1648–1739 (PRIV…VTLS), 1745–1836 (PRIL…VKIQ), 1841–1933 (PPVI…VMLT), 1941–2034 (PRIE…VSLR), 2037–2135 (PAKI…VHLT), 2141–2229 (PRIR…YKLD), 2234–2331 (PPLI…LEVL), 2337–2427 (PTFR…VILE), 2432–2518 (PVIL…TLIT), and 2528–2623 (PRIT…IQVI). 3 disulfides stabilise this stretch: Cys-1670-Cys-1723, Cys-1767-Cys-1820, and Cys-1864-Cys-1917. N-linked (GlcNAc...) asparagine glycans are attached at residues Asn-1899 and Asn-1962. 7 disulfides stabilise this stretch: Cys-1963/Cys-2016, Cys-2060/Cys-2119, Cys-2163/Cys-2213, Cys-2261/Cys-2313, Cys-2359/Cys-2411, Cys-2454/Cys-2506, and Cys-2550/Cys-2605. Asn-2101 carries N-linked (GlcNAc...) asparagine glycosylation. At Tyr-2603 the chain carries Phosphotyrosine.

Its subcellular location is the secreted. Involved in the control of early migration of neurons expressing gonadotropin-releasing hormone (GNRH neurons). May be involved in the maintenance of osteochondroprogenitor cells pool. The chain is Immunoglobulin superfamily member 10 (IGSF10) from Homo sapiens (Human).